Here is a 177-residue protein sequence, read N- to C-terminus: Phosphatidylglycerol/phosphatidylinositol transfer protein (177 aa).

Positions 1 to 17 (MRLSAAVIALLSTSAAA) are cleaved as a signal peptide. A propeptide spanning residues 18–30 (FSVYRENSVSAND) is cleaved from the precursor.

It belongs to the NPC2 family. In terms of assembly, monomer.

Catalyzes the intermembrane transfer of phosphatidylglycerol and phosphatidylinositol. The sequence is that of Phosphatidylglycerol/phosphatidylinositol transfer protein (npc-2) from Neurospora crassa (strain ATCC 24698 / 74-OR23-1A / CBS 708.71 / DSM 1257 / FGSC 987).